The primary structure comprises 994 residues: Phosphoenolpyruvate carboxylase (994 aa).

The disordered stretch occupies residues 1 to 66 (MKSSGSARAT…QGRTREDKDR (66 aa)). Low complexity-rich tracts occupy residues 14–25 (AVSSSSAPAHAE) and 41–54 (AAARPLAPTNAASA). Active-site residues include His-204 and Lys-646.

The protein belongs to the PEPCase type 1 family. Requires Mg(2+) as cofactor.

The catalysed reaction is oxaloacetate + phosphate = phosphoenolpyruvate + hydrogencarbonate. Functionally, forms oxaloacetate, a four-carbon dicarboxylic acid source for the tricarboxylic acid cycle. The polypeptide is Phosphoenolpyruvate carboxylase (Burkholderia mallei (strain NCTC 10247)).